Here is a 743-residue protein sequence, read N- to C-terminus: Phosphoribosylformylglycinamidine synthase subunit PurL (743 aa).

Histidine 50 is an active-site residue. ATP contacts are provided by tyrosine 53 and lysine 92. Position 94 (glutamate 94) interacts with Mg(2+). Residues 95 to 98 (SHNH) and arginine 117 each bind substrate. Histidine 96 (proton acceptor) is an active-site residue. Aspartate 118 is a Mg(2+) binding site. Glutamine 241 contacts substrate. Residue aspartate 269 participates in Mg(2+) binding. Position 313–315 (313–315 (ESQ)) interacts with substrate. Aspartate 494 and glycine 531 together coordinate ATP. A Mg(2+)-binding site is contributed by asparagine 532. A substrate-binding site is contributed by serine 534.

This sequence belongs to the FGAMS family. In terms of assembly, monomer. Part of the FGAM synthase complex composed of 1 PurL, 1 PurQ and 2 PurS subunits.

The protein resides in the cytoplasm. The catalysed reaction is N(2)-formyl-N(1)-(5-phospho-beta-D-ribosyl)glycinamide + L-glutamine + ATP + H2O = 2-formamido-N(1)-(5-O-phospho-beta-D-ribosyl)acetamidine + L-glutamate + ADP + phosphate + H(+). The protein operates within purine metabolism; IMP biosynthesis via de novo pathway; 5-amino-1-(5-phospho-D-ribosyl)imidazole from N(2)-formyl-N(1)-(5-phospho-D-ribosyl)glycinamide: step 1/2. Its function is as follows. Part of the phosphoribosylformylglycinamidine synthase complex involved in the purines biosynthetic pathway. Catalyzes the ATP-dependent conversion of formylglycinamide ribonucleotide (FGAR) and glutamine to yield formylglycinamidine ribonucleotide (FGAM) and glutamate. The FGAM synthase complex is composed of three subunits. PurQ produces an ammonia molecule by converting glutamine to glutamate. PurL transfers the ammonia molecule to FGAR to form FGAM in an ATP-dependent manner. PurS interacts with PurQ and PurL and is thought to assist in the transfer of the ammonia molecule from PurQ to PurL. The sequence is that of Phosphoribosylformylglycinamidine synthase subunit PurL from Rhizobium meliloti (strain 1021) (Ensifer meliloti).